The chain runs to 225 residues: uncharacterized protein (225 aa).

Asn-48, Asn-58, Asn-105, and Asn-108 each carry an N-linked (GlcNAc...) asparagine; by host glycan. A helical membrane pass occupies residues 156–178 (LWGYLKQPLVMVGIAAVVGYLIY).

Belongs to the ascovirus HvAv ORF58 family.

Its subcellular location is the membrane. This is an uncharacterized protein from Heliothis virescens ascovirus 3e (HvAV-3e).